The chain runs to 341 residues: MAKEIILTGDRPTGKLHIGHYVGSLKNRVQLQNSGDYRSFIMIADQQALTDNARNPEKIRNSLIEVALDYLAVGIDPLKSTILVQSQIPELNELTMHYLNLVTLSRLERNPTVKAEIKQKNFENSIPAGFLIYPVSQAADITAFKATTVPVGEDQLPMIEQAREIVRSFNTIYGKEVLVEPKAVIPKGTIGRLPGTDGKAKMSKSIGNAIYLADEADVIKQKVMSMYTDPNHIKVTDPGQVEGNTVFTYLDTFCKDTETLEEMKAHYSRGGLGDVKVKKFLNEILQAELEPIRNRRKEFQKDIPEVYRILKEGSEKAREVAAGTLKEVRETIGIEYFNNIF.

ATP contacts are provided by residues 11–13 (RPT) and 19–20 (GH). The short motif at 12–20 (PTGKLHIGH) is the 'HIGH' region element. Aspartate 140 serves as a coordination point for L-tryptophan. Residues 152 to 154 (GED), leucine 193, and 201 to 205 (KMSKS) each bind ATP. The 'KMSKS' region motif lies at 201–205 (KMSKS).

Belongs to the class-I aminoacyl-tRNA synthetase family. As to quaternary structure, homodimer.

It is found in the cytoplasm. It catalyses the reaction tRNA(Trp) + L-tryptophan + ATP = L-tryptophyl-tRNA(Trp) + AMP + diphosphate + H(+). Its function is as follows. Catalyzes the attachment of tryptophan to tRNA(Trp). In Clostridium longisporum, this protein is Tryptophan--tRNA ligase.